We begin with the raw amino-acid sequence, 609 residues long: Probable translation initiation factor IF-2 (609 aa).

One can recognise a tr-type G domain in the interval 12 to 230; the sequence is LRQPIVAVLG…VLAGLAQRYM (219 aa). Residues 21 to 28 form a G1 region; it reads GHVDHGKT. 21-28 is a binding site for GTP; that stretch reads GHVDHGKT. The interval 46–50 is G2; the sequence is QITQH. Residues 86 to 89 are G3; the sequence is DTPG. GTP is bound by residues 86–90 and 140–143; these read DTPGH and NKID. Positions 140-143 are G4; the sequence is NKID. A G5 region spans residues 208–210; the sequence is SAK.

This sequence belongs to the TRAFAC class translation factor GTPase superfamily. Classic translation factor GTPase family. IF-2 subfamily.

Function in general translation initiation by promoting the binding of the formylmethionine-tRNA to ribosomes. Seems to function along with eIF-2. This is Probable translation initiation factor IF-2 from Ignicoccus hospitalis (strain KIN4/I / DSM 18386 / JCM 14125).